The primary structure comprises 183 residues: SAYSvFN domain-containing protein 1 (183 aa).

Residues 1–105 (MEQRLAEFRA…SFLTNITFLK (105 aa)) are Cytoplasmic-facing. Positions 11 to 36 (ARKRAGLAAQPPAASQGAQTPGEKAE) are disordered. The span at 16-36 (GLAAQPPAASQGAQTPGEKAE) shows a compositional bias: low complexity. Positions 91-105 (SCWDQSFLTNITFLK) are middle helical (MH). The segment at residues 106–126 (VLLWLVLLGLFVELEFGLAYF) is an intramembrane region (helical). The Cytoplasmic segment spans residues 127-183 (VLSLFYWMYVGTRGPEEKKEGEKSAYSVFNPGCEAIQGTLTAEQLERELQLRPLAGR).

This sequence belongs to the SAYSD1 family. Associates (via N-terminus) with ribosomes.

Its subcellular location is the endoplasmic reticulum membrane. It is found in the cytoplasmic vesicle membrane. In terms of biological role, ufmylation 'reader' component of a translocation-associated quality control pathway, a mechanism that takes place when a ribosome has stalled during translation, and which is required to degrade clogged substrates. Specifically recognizes and binds ufmylated ribosomes when a ribosome has stalled, promoting the transport of stalled nascent chain via the TRAPP complex to lysosomes for degradation. The chain is SAYSvFN domain-containing protein 1 from Homo sapiens (Human).